A 212-amino-acid chain; its full sequence is WAP four-disulfide core domain protein 1 (212 aa).

An N-terminal signal peptide occupies residues 1–26 (MGSCDRKALWALSFLLLLLGSSSVQG). Residues 43–62 (EEVAATGSRQPHADRCPPPP) form a disordered region. One can recognise a WAP domain in the interval 51–100 (RQPHADRCPPPPRTLPPGACQATRCQSDSECPRHRRCCYNGCAYACLEAV). Intrachain disulfides connect cysteine 58/cysteine 88, cysteine 70/cysteine 92, cysteine 75/cysteine 87, and cysteine 81/cysteine 96. Residues 191-212 (EYPEGDSKYVAEPGKGQQRHFP) are disordered.

In terms of tissue distribution, vascular smooth muscle and prostate. Periacinar ring.

It localises to the secreted. Has growth inhibitory activity. This Rattus norvegicus (Rat) protein is WAP four-disulfide core domain protein 1 (Wfdc1).